Reading from the N-terminus, the 910-residue chain is Leucine--tRNA ligase (910 aa).

Positions 50 to 60 (PYTNGSLHVGH) match the 'HIGH' region motif. The 'KMSKS' region motif lies at 611–615 (KISKS). Residue lysine 614 coordinates ATP.

The protein belongs to the class-I aminoacyl-tRNA synthetase family.

Its subcellular location is the cytoplasm. The catalysed reaction is tRNA(Leu) + L-leucine + ATP = L-leucyl-tRNA(Leu) + AMP + diphosphate. This chain is Leucine--tRNA ligase, found in Thermoplasma acidophilum (strain ATCC 25905 / DSM 1728 / JCM 9062 / NBRC 15155 / AMRC-C165).